A 262-amino-acid chain; its full sequence is Thiazole synthase (262 aa).

Lysine 98 acts as the Schiff-base intermediate with DXP in catalysis. Residues glycine 159, 186 to 187, and 208 to 209 each bind 1-deoxy-D-xylulose 5-phosphate; these read AG and NT.

The protein belongs to the ThiG family. As to quaternary structure, homotetramer. Forms heterodimers with either ThiH or ThiS.

It is found in the cytoplasm. It carries out the reaction [ThiS sulfur-carrier protein]-C-terminal-Gly-aminoethanethioate + 2-iminoacetate + 1-deoxy-D-xylulose 5-phosphate = [ThiS sulfur-carrier protein]-C-terminal Gly-Gly + 2-[(2R,5Z)-2-carboxy-4-methylthiazol-5(2H)-ylidene]ethyl phosphate + 2 H2O + H(+). The protein operates within cofactor biosynthesis; thiamine diphosphate biosynthesis. Catalyzes the rearrangement of 1-deoxy-D-xylulose 5-phosphate (DXP) to produce the thiazole phosphate moiety of thiamine. Sulfur is provided by the thiocarboxylate moiety of the carrier protein ThiS. In vitro, sulfur can be provided by H(2)S. The chain is Thiazole synthase from Hahella chejuensis (strain KCTC 2396).